The primary structure comprises 435 residues: 3-ketoacyl-CoA thiolase (435 aa).

The active-site Acyl-thioester intermediate is the C98. Catalysis depends on proton acceptor residues H391 and C421.

The protein belongs to the thiolase-like superfamily. Thiolase family. In terms of assembly, heterotetramer of two alpha chains (FadJ) and two beta chains (FadI).

Its subcellular location is the cytoplasm. It carries out the reaction an acyl-CoA + acetyl-CoA = a 3-oxoacyl-CoA + CoA. It participates in lipid metabolism; fatty acid beta-oxidation. In terms of biological role, catalyzes the final step of fatty acid oxidation in which acetyl-CoA is released and the CoA ester of a fatty acid two carbons shorter is formed. The polypeptide is 3-ketoacyl-CoA thiolase (Vibrio parahaemolyticus serotype O3:K6 (strain RIMD 2210633)).